The sequence spans 260 residues: Hydroxyethylthiazole kinase 1 (260 aa).

A substrate-binding site is contributed by Met39. 2 residues coordinate ATP: Arg115 and Thr160. Gly187 lines the substrate pocket.

The protein belongs to the Thz kinase family. The cofactor is Mg(2+).

It carries out the reaction 5-(2-hydroxyethyl)-4-methylthiazole + ATP = 4-methyl-5-(2-phosphooxyethyl)-thiazole + ADP + H(+). The protein operates within cofactor biosynthesis; thiamine diphosphate biosynthesis; 4-methyl-5-(2-phosphoethyl)-thiazole from 5-(2-hydroxyethyl)-4-methylthiazole: step 1/1. Functionally, catalyzes the phosphorylation of the hydroxyl group of 4-methyl-5-beta-hydroxyethylthiazole (THZ). The protein is Hydroxyethylthiazole kinase 1 of Streptococcus pneumoniae serotype 4 (strain ATCC BAA-334 / TIGR4).